Reading from the N-terminus, the 323-residue chain is PI-PLC X domain-containing protein 1 (323 aa).

Residues 30 to 206 form the PI-PLC X-box domain; it reads RLWDVPLHHL…QVIVSYEDES (177 aa).

In terms of tissue distribution, widely expressed.

Its subcellular location is the cytoplasm. The chain is PI-PLC X domain-containing protein 1 (PLCXD1) from Homo sapiens (Human).